Reading from the N-terminus, the 570-residue chain is Sulfite reductase [NADPH] hemoprotein beta-component 1 (570 aa).

Cysteine 434, cysteine 440, cysteine 479, and cysteine 483 together coordinate [4Fe-4S] cluster. Cysteine 483 contacts siroheme.

This sequence belongs to the nitrite and sulfite reductase 4Fe-4S domain family. In terms of assembly, alpha(8)-beta(8). The alpha component is a flavoprotein, the beta component is a hemoprotein. Siroheme serves as cofactor. The cofactor is [4Fe-4S] cluster.

The catalysed reaction is hydrogen sulfide + 3 NADP(+) + 3 H2O = sulfite + 3 NADPH + 4 H(+). It participates in sulfur metabolism; hydrogen sulfide biosynthesis; hydrogen sulfide from sulfite (NADPH route): step 1/1. Component of the sulfite reductase complex that catalyzes the 6-electron reduction of sulfite to sulfide. This is one of several activities required for the biosynthesis of L-cysteine from sulfate. The chain is Sulfite reductase [NADPH] hemoprotein beta-component 1 from Klebsiella pneumoniae (strain 342).